The following is a 141-amino-acid chain: Protein stum homolog (141 aa).

Ser-26 bears the Phosphoserine mark. Transmembrane regions (helical) follow at residues Phe-51–Val-71 and Arg-87–Ala-107.

The protein belongs to the SPEC3 family. Stum subfamily.

It is found in the membrane. The sequence is that of Protein stum homolog from Homo sapiens (Human).